Consider the following 785-residue polypeptide: Neutral ceramidase (785 aa).

An N-terminal signal peptide occupies residues 1–35; sequence MEASSWLCYQARGFGSSRVWLWLLLALVLLNCSLV. A glycan (N-linked (GlcNAc...) asparagine) is linked at N31. S359 functions as the Nucleophile in the catalytic mechanism. N377, N675, and N685 each carry an N-linked (GlcNAc...) asparagine glycan.

This sequence belongs to the neutral ceramidase family. Expressed in seedlings, with higher levels in roots than in shoots.

The protein localises to the secreted. The protein resides in the endoplasmic reticulum. It is found in the golgi apparatus. It carries out the reaction an N-acylsphing-4-enine + H2O = sphing-4-enine + a fatty acid. With respect to regulation, enhanced activity in the presence of calcium, magnesium, manganese and zinc ions, but inhibited activity in the presence of iron ion. Functionally, hydrolyzes the sphingolipid ceramide into sphingosine and free fatty acid. Uses ceramide instead of phytoceramide as substrate. The polypeptide is Neutral ceramidase (Oryza sativa subsp. japonica (Rice)).